The chain runs to 482 residues: Glutamate--tRNA ligase 2 (482 aa).

Positions 16–26 match the 'HIGH' region motif; the sequence is PSPTGYLHLGN. Residues cysteine 113, cysteine 115, cysteine 140, and histidine 142 each coordinate Zn(2+). The short motif at 257 to 261 is the 'KMSKS' region element; it reads PLSKR. Lysine 260 is a binding site for ATP.

This sequence belongs to the class-I aminoacyl-tRNA synthetase family. Glutamate--tRNA ligase type 1 subfamily. Monomer. Zn(2+) serves as cofactor.

It localises to the cytoplasm. The catalysed reaction is tRNA(Glu) + L-glutamate + ATP = L-glutamyl-tRNA(Glu) + AMP + diphosphate. In terms of biological role, catalyzes the attachment of glutamate to tRNA(Glu) in a two-step reaction: glutamate is first activated by ATP to form Glu-AMP and then transferred to the acceptor end of tRNA(Glu). In Acidithiobacillus ferrooxidans (strain ATCC 53993 / BNL-5-31) (Leptospirillum ferrooxidans (ATCC 53993)), this protein is Glutamate--tRNA ligase 2.